Here is a 228-residue protein sequence, read N- to C-terminus: Protein boule (228 aa).

The RRM domain occupies 33 to 110; sequence NRIFVGGISG…RKLNIAPAIK (78 aa). A DAZ domain is found at 151–178; that stretch reads PAAGVPAIYPPSAMQYQPFYQYYSVPMN. Over residues 193-214 the composition is skewed to low complexity; sequence PLLHSPTSNPHSPHSQSHPQSP. The segment at 193 to 228 is disordered; that stretch reads PLLHSPTSNPHSPHSQSHPQSPCWSIEDLRDTLPRV. The span at 219–228 shows a compositional bias: basic and acidic residues; the sequence is EDLRDTLPRV.

This sequence belongs to the RRM DAZ family. In terms of assembly, interacts with the translational regulator orb2. Testis specific.

The protein resides in the nucleus. The protein localises to the cytoplasm. Functionally, RNA-binding protein that plays a central role in spermatogenesis. Required for meiotic entry and germline differentiation, at the transition between G2 and M phases of meiosis I. Acts by regulating translation of specific mRNAs, possibly by binding to their 3'-UTR. Essential for translation of twine (twe) mRNA. Required for the expression of various genes such as CG6784, CG17210, CG15841 scpr-B, scpr-C, and rho-6. This Drosophila melanogaster (Fruit fly) protein is Protein boule (bol).